Consider the following 547-residue polypeptide: Glucose-6-phosphate isomerase 2 (547 aa).

The Proton donor role is filled by Glu-351. Active-site residues include His-382 and Lys-508.

This sequence belongs to the GPI family.

It localises to the cytoplasm. The enzyme catalyses alpha-D-glucose 6-phosphate = beta-D-fructose 6-phosphate. It functions in the pathway carbohydrate biosynthesis; gluconeogenesis. It participates in carbohydrate degradation; glycolysis; D-glyceraldehyde 3-phosphate and glycerone phosphate from D-glucose: step 2/4. In terms of biological role, catalyzes the reversible isomerization of glucose-6-phosphate to fructose-6-phosphate. This is Glucose-6-phosphate isomerase 2 from Neisseria meningitidis serogroup A / serotype 4A (strain DSM 15465 / Z2491).